The chain runs to 199 residues: Probable GTP-binding protein EngB (199 aa).

The 172-residue stretch at 28–199 folds into the EngB-type G domain; that stretch reads DLPEIALAGR…ESWDTILEYL (172 aa). GTP contacts are provided by residues 36 to 43, 63 to 67, 81 to 84, 148 to 151, and 180 to 182; these read GRSNVGKS, GKTQL, DVPG, TKAD, and FSS. Positions 43 and 65 each coordinate Mg(2+).

It belongs to the TRAFAC class TrmE-Era-EngA-EngB-Septin-like GTPase superfamily. EngB GTPase family. The cofactor is Mg(2+).

Necessary for normal cell division and for the maintenance of normal septation. The polypeptide is Probable GTP-binding protein EngB (Streptococcus equi subsp. zooepidemicus (strain H70)).